A 518-amino-acid chain; its full sequence is U3 small nucleolar RNA-associated protein 15 homolog (518 aa).

Position 2 is an N-acetylalanine (Ala-2). WD repeat units follow at residues 36 to 75 (KEFG…PIKT), 78 to 117 (RFKD…PLRQ), 120 to 159 (GHTK…EILT), 162 to 202 (EHSD…SVLS), 204 to 242 (EHGQ…QLLV), 246 to 285 (NHHK…VVHS), and 287 to 326 (DYAA…KKES). Lys-249 participates in a covalent cross-link: Glycyl lysine isopeptide (Lys-Gly) (interchain with G-Cter in SUMO2).

As to quaternary structure, part of the small subunit (SSU) processome, composed of more than 70 proteins and the RNA chaperone small nucleolar RNA (snoRNA) U3. May be a component of the proposed t-UTP subcomplex of the ribosomal small subunit (SSU) processome containing at least UTP4, WDR43, HEATR1, UTP15, WDR75. Interacts directly with UTP4 and WDR43.

The protein localises to the nucleus. The protein resides in the nucleolus. Functionally, ribosome biogenesis factor. Involved in nucleolar processing of pre-18S ribosomal RNA. Required for optimal pre-ribosomal RNA transcription by RNA polymerase I. Part of the small subunit (SSU) processome, first precursor of the small eukaryotic ribosomal subunit. During the assembly of the SSU processome in the nucleolus, many ribosome biogenesis factors, an RNA chaperone and ribosomal proteins associate with the nascent pre-rRNA and work in concert to generate RNA folding, modifications, rearrangements and cleavage as well as targeted degradation of pre-ribosomal RNA by the RNA exosome. The chain is U3 small nucleolar RNA-associated protein 15 homolog from Homo sapiens (Human).